The chain runs to 162 residues: Cyanate hydratase (162 aa).

Active-site residues include R103, E106, and S129.

It belongs to the cyanase family.

It catalyses the reaction cyanate + hydrogencarbonate + 3 H(+) = NH4(+) + 2 CO2. Its function is as follows. Catalyzes the reaction of cyanate with bicarbonate to produce ammonia and carbon dioxide. The polypeptide is Cyanate hydratase (Pyrenophora tritici-repentis (strain Pt-1C-BFP) (Wheat tan spot fungus)).